Here is a 466-residue protein sequence, read N- to C-terminus: A-type ATP synthase subunit B (466 aa).

This sequence belongs to the ATPase alpha/beta chains family. Has multiple subunits with at least A(3), B(3), C, D, E, F, H, I and proteolipid K(x).

The protein localises to the cell membrane. In terms of biological role, component of the A-type ATP synthase that produces ATP from ADP in the presence of a proton gradient across the membrane. The B chain is a regulatory subunit. This is A-type ATP synthase subunit B from Metallosphaera sedula (strain ATCC 51363 / DSM 5348 / JCM 9185 / NBRC 15509 / TH2).